The following is a 175-amino-acid chain: Nucleoside triphosphate/diphosphate phosphatase (175 aa).

Arg23 serves as the catalytic Proton donor. Positions 87, 103, 105, 107, 120, and 123 each coordinate Mg(2+).

This sequence belongs to the Ntdp family. It depends on Mg(2+) as a cofactor.

The enzyme catalyses a ribonucleoside 5'-triphosphate + H2O = a ribonucleoside 5'-diphosphate + phosphate + H(+). It carries out the reaction a ribonucleoside 5'-diphosphate + H2O = a ribonucleoside 5'-phosphate + phosphate + H(+). Its function is as follows. Has nucleoside phosphatase activity towards nucleoside triphosphates and nucleoside diphosphates. The sequence is that of Nucleoside triphosphate/diphosphate phosphatase from Oceanobacillus iheyensis (strain DSM 14371 / CIP 107618 / JCM 11309 / KCTC 3954 / HTE831).